Reading from the N-terminus, the 841-residue chain is Putative helicase R592 (841 aa).

The 238-residue stretch at serine 72 to glutamine 309 folds into the Helicase ATP-binding domain. Residue aspartate 85–threonine 92 coordinates ATP. Over residues lysine 195–glycine 205 the composition is skewed to basic residues. The tract at residues lysine 195 to aspartate 215 is disordered. Over residues serine 206–aspartate 215 the composition is skewed to polar residues. Positions aspartate 266 to aspartate 269 match the DEAD box motif. Residues glutamine 413 to cysteine 450 adopt a coiled-coil conformation. Residues cysteine 451–arginine 491 form an RING-type; degenerate zinc finger. Residues valine 531–asparagine 682 form the Helicase C-terminal domain. The disordered stretch occupies residues proline 678–valine 841. Over residues leucine 681 to valine 697 the composition is skewed to acidic residues. Over residues glutamate 698–serine 725 the composition is skewed to basic and acidic residues. Residues serine 726–valine 749 are compositionally biased toward basic residues. Acidic residues-rich tracts occupy residues aspartate 765–aspartate 774 and serine 782–isoleucine 804. Basic residues-rich tracts occupy residues lysine 809 to lysine 821 and threonine 828 to valine 841.

The polypeptide is Putative helicase R592 (Acanthamoeba polyphaga mimivirus (APMV)).